A 339-amino-acid polypeptide reads, in one-letter code: Phenylalanine--tRNA ligase alpha subunit (339 aa).

Residue Glu-254 participates in Mg(2+) binding.

This sequence belongs to the class-II aminoacyl-tRNA synthetase family. Phe-tRNA synthetase alpha subunit type 1 subfamily. As to quaternary structure, tetramer of two alpha and two beta subunits. The cofactor is Mg(2+).

It is found in the cytoplasm. The enzyme catalyses tRNA(Phe) + L-phenylalanine + ATP = L-phenylalanyl-tRNA(Phe) + AMP + diphosphate + H(+). The chain is Phenylalanine--tRNA ligase alpha subunit from Lachnoclostridium phytofermentans (strain ATCC 700394 / DSM 18823 / ISDg) (Clostridium phytofermentans).